A 1023-amino-acid polypeptide reads, in one-letter code: uncharacterized protein (1023 aa).

The interval 1 to 35 (MAEKRPLGPLGPMMYGKLPRLEPDPGPGHSLPLSA) is disordered. At Lys-17 the chain carries N6-acetyllysine. Residues Ser-206 and Ser-383 each carry the phosphoserine modification. Disordered regions lie at residues 381 to 501 (GASP…PVID), 518 to 551 (PEPRAERDSAPATSKSQDKDCKGNLPAQDGASRS), 703 to 742 (PAPASAPPPSPAPAPAPASGPAPSSAQVPTAAPVDSPEQH), 907 to 980 (EART…TLRA), and 1002 to 1023 (KASGADRSSPHPQLLGSQTHHL). Thr-389 carries the phosphothreonine modification. Polar residues predominate over residues 391–400 (PSHSQNSVQP). Basic and acidic residues-rich tracts occupy residues 425 to 436 (RPAEKPTPEAQE), 443 to 454 (CRKEQLQPRPNE), and 477 to 490 (CAKERQSVPQKDAR). 2 positions are modified to phosphoserine: Ser-493 and Ser-494. The span at 706–722 (ASAPPPSPAPAPAPASG) shows a compositional bias: pro residues. Residues Ser-912, Ser-964, and Ser-972 each carry the phosphoserine modification. Positions 963-972 (PSPSSGASTS) are enriched in low complexity.

This is an uncharacterized protein from Mus musculus (Mouse).